The following is a 518-amino-acid chain: Putative BTB/POZ domain and WD-repeat protein R731 (518 aa).

The region spanning 22 to 92 (TDCQLHLTDS…FYGFPLEEPN (71 aa)) is the BTB domain. The tract at residues 224-246 (NHEESSDDEVNDDEDTDNEDTDD) is disordered. Over residues 228–246 (SSDDEVNDDEDTDNEDTDD) the composition is skewed to acidic residues. WD repeat units follow at residues 391-430 (NHST…SLIK) and 437-475 (FLKF…IIQN).

It belongs to the mimivirus BTB/WD family.

In Acanthamoeba polyphaga (Amoeba), this protein is Putative BTB/POZ domain and WD-repeat protein R731.